We begin with the raw amino-acid sequence, 758 residues long: General transcription and DNA repair factor IIH helicase subunit XPD (758 aa).

Residues 7 to 285 enclose the Helicase ATP-binding domain; it reads DVTVYFPYDN…TDAGRLRAEY (279 aa). 42–49 contributes to the ATP binding site; it reads MPTGTGKT. The [4Fe-4S] cluster site is built by Cys116, Cys134, Cys155, and Cys190. The DEAH box signature appears at 234 to 238; that stretch reads DEAHN.

The protein belongs to the helicase family. RAD3/XPD subfamily. Component of the 7-subunit TFIIH core complex composed of XPB, XPD, TFB1/GTF2H1, GTF2H2/P44, TFB4/GTF2H3, TFB2/GTF2H4 and TFB5/GTF2H5, which is active in NER. The core complex associates with the 3-subunit CDK-activating kinase (CAK) module composed of CYCH1/cyclin H1, CDKD and MAT1/At4g30820 to form the 10-subunit holoenzyme (holo-TFIIH) active in transcription. Interacts with GTF2H2/p44. Requires [4Fe-4S] cluster as cofactor. In terms of tissue distribution, expressed at low levels in all tissues.

Its subcellular location is the nucleus. The catalysed reaction is Couples ATP hydrolysis with the unwinding of duplex DNA at the replication fork by translocating in the 5'-3' direction. This creates two antiparallel DNA single strands (ssDNA). The leading ssDNA polymer is the template for DNA polymerase III holoenzyme which synthesizes a continuous strand.. The enzyme catalyses ATP + H2O = ADP + phosphate + H(+). ATP-dependent 5'-3' DNA helicase, component of the general transcription and DNA repair factor IIH (TFIIH) core complex, which is involved in general and transcription-coupled nucleotide excision repair (NER) of damaged DNA and, when complexed to CDK-activating kinase (CAK), involved in transcription by RNA polymerase II. In NER, TFIIH acts by opening DNA around the lesion to allow the excision of the damaged oligonucleotide and its replacement by a new DNA fragment. The ATP-dependent helicase activity of XPD is required for DNA opening. In transcription, TFIIH has an essential role in transcription initiation. When the pre-initiation complex (PIC) has been established, TFIIH is required for promoter opening and promoter escape. Phosphorylation of the C-terminal tail (CTD) of the largest subunit of RNA polymerase II by the kinase module CAK controls the initiation of transcription. XPD acts by forming a bridge between CAK and the core-TFIIH complex. Essential during plant growth. May negatively regulate a common response program mediated by UV damage and heat stress, that leads to tissue death and reduced chloroplast function. The chain is General transcription and DNA repair factor IIH helicase subunit XPD from Arabidopsis thaliana (Mouse-ear cress).